Here is a 246-residue protein sequence, read N- to C-terminus: MEPVINFSNVTKEYPLYHHIGSGIKDLVFHPKRAFQLLKGRKYLAIEDISFTVAKGEAVALIGRNGAGKSTSLGLVAGVIKPTKGSVTTHGRVASMLELGGGFHPELTGRENIYLNATLLGLRRKEVQQRMERIIEFSELGEFIDEPIRVYSSGMLAKLGFSVISQVEPDILIIDEVLAVGDISFQAKCIKTIREFKKKGVTILFVSHNMSDVERICDRVVWIENHRLREIGSAERIIELYKQAMA.

Residues 22–246 (SGIKDLVFHP…IIELYKQAMA (225 aa)) enclose the ABC transporter domain. 63-70 (GRNGAGKS) contributes to the ATP binding site.

The protein belongs to the ABC transporter superfamily.

The protein resides in the cell inner membrane. Its function is as follows. May form an ATP-driven O-antigen export apparatus, in association with RfbA. The protein is O-antigen export system ATP-binding protein RfbB (rfbB) of Klebsiella pneumoniae.